The chain runs to 350 residues: Palmitoyltransferase erf2 (350 aa).

The Cytoplasmic segment spans residues 1–86; sequence MSYEKHSDAK…RLQMSSQYKA (86 aa). The chain crosses the membrane as a helical span at residues 87 to 107; it reads FLISLFALILPGVLFFIFSAF. At 108 to 112 the chain is on the lumenal side; that stretch reads WLWHH. A helical transmembrane segment spans residues 113–133; it reads VSPAVPITFAYLYALAVVSMF. Residues 134-225 are Cytoplasmic-facing; it reads KCSTADPGIL…NTCIGRRNYR (92 aa). One can recognise a DHHC domain in the interval 182–232; it reads VYCHTCHLYRPPRASHCHLCDNCVEYLDHHCIWLNTCIGRRNYRYYFIFLL. C212 serves as the catalytic S-palmitoyl cysteine intermediate. The helical transmembrane segment at 226–246 threads the bilayer; that stretch reads YYFIFLLSVVLSALYLTGLGF. Topologically, residues 247 to 270 are lumenal; the sequence is YTSIGSFHESTDTNFAAHLRRPWA. Residues 271 to 291 traverse the membrane as a helical segment; it reads GVSFFLGIYGALGAILPGILF. The Cytoplasmic segment spans residues 292–350; that stretch reads CYQCYLISVGQNVHEYLRAKSTETEDVHPFHDSIWLNFLVVLCRPKNVSYVRPTRKSYV.

The protein belongs to the DHHC palmitoyltransferase family. ERF2/ZDHHC9 subfamily. As to quaternary structure, interacts with erf4. Post-translationally, autopalmitoylated.

Its subcellular location is the endoplasmic reticulum membrane. It localises to the golgi apparatus. The protein localises to the golgi stack membrane. It carries out the reaction L-cysteinyl-[protein] + hexadecanoyl-CoA = S-hexadecanoyl-L-cysteinyl-[protein] + CoA. The erf2-erf4 complex is a palmitoyltransferase with a major role in driving sexual development. Palmitoylates ras1. Palmitoylates isp3. Palmitoylates rho3. The sequence is that of Palmitoyltransferase erf2 from Schizosaccharomyces pombe (strain 972 / ATCC 24843) (Fission yeast).